The sequence spans 21 residues: Pollen allergen Ole e 7 (21 aa).

This Olea europaea (Common olive) protein is Pollen allergen Ole e 7.